The sequence spans 375 residues: Aminomethyltransferase (375 aa).

The protein belongs to the GcvT family. As to quaternary structure, the glycine cleavage system is composed of four proteins: P, T, L and H.

The enzyme catalyses N(6)-[(R)-S(8)-aminomethyldihydrolipoyl]-L-lysyl-[protein] + (6S)-5,6,7,8-tetrahydrofolate = N(6)-[(R)-dihydrolipoyl]-L-lysyl-[protein] + (6R)-5,10-methylene-5,6,7,8-tetrahydrofolate + NH4(+). The glycine cleavage system catalyzes the degradation of glycine. The polypeptide is Aminomethyltransferase (Cupriavidus necator (strain ATCC 17699 / DSM 428 / KCTC 22496 / NCIMB 10442 / H16 / Stanier 337) (Ralstonia eutropha)).